We begin with the raw amino-acid sequence, 714 residues long: FERM domain-containing protein 7 (714 aa).

The region spanning 2–282 (LHLKVQFLDD…EYHAFFRLSE (281 aa)) is the FERM domain. Residues 537-558 (NIRMKSFQQDLQVLQEAIARTS) adopt a coiled-coil conformation.

Expressed in liver, kidney, pancreas and at low levels in brain and heart. Expressed in embryonic brain and developing neural retina.

It is found in the cell projection. The protein localises to the neuron projection. The protein resides in the growth cone. Functionally, plays a role in neurite development, may be through the activation of the GTPase RAC1. Plays a role in the control of eye movement and gaze stability. This chain is FERM domain-containing protein 7 (FRMD7), found in Homo sapiens (Human).